Here is a 373-residue protein sequence, read N- to C-terminus: Queuine tRNA-ribosyltransferase (373 aa).

Asp93 acts as the Proton acceptor in catalysis. Substrate contacts are provided by residues 93–97 (DSGGF), Asp147, Gln189, and Gly216. Residues 247–253 (GVGAPED) are RNA binding. Asp266 serves as the catalytic Nucleophile. An RNA binding; important for wobble base 34 recognition region spans residues 271–275 (TRIAR). 4 residues coordinate Zn(2+): Cys304, Cys306, Cys309, and His335.

The protein belongs to the queuine tRNA-ribosyltransferase family. In terms of assembly, homodimer. Within each dimer, one monomer is responsible for RNA recognition and catalysis, while the other monomer binds to the replacement base PreQ1. It depends on Zn(2+) as a cofactor.

The enzyme catalyses 7-aminomethyl-7-carbaguanine + guanosine(34) in tRNA = 7-aminomethyl-7-carbaguanosine(34) in tRNA + guanine. The protein operates within tRNA modification; tRNA-queuosine biosynthesis. Catalyzes the base-exchange of a guanine (G) residue with the queuine precursor 7-aminomethyl-7-deazaguanine (PreQ1) at position 34 (anticodon wobble position) in tRNAs with GU(N) anticodons (tRNA-Asp, -Asn, -His and -Tyr). Catalysis occurs through a double-displacement mechanism. The nucleophile active site attacks the C1' of nucleotide 34 to detach the guanine base from the RNA, forming a covalent enzyme-RNA intermediate. The proton acceptor active site deprotonates the incoming PreQ1, allowing a nucleophilic attack on the C1' of the ribose to form the product. After dissociation, two additional enzymatic reactions on the tRNA convert PreQ1 to queuine (Q), resulting in the hypermodified nucleoside queuosine (7-(((4,5-cis-dihydroxy-2-cyclopenten-1-yl)amino)methyl)-7-deazaguanosine). The chain is Queuine tRNA-ribosyltransferase from Halothermothrix orenii (strain H 168 / OCM 544 / DSM 9562).